The chain runs to 359 residues: 3-dehydroquinate synthase (359 aa).

Residues 71–76 (DGEQYK), 105–109 (GVIGD), 129–130 (TT), K142, K151, and 169–172 (CLAT) each bind NAD(+). Residues E184, H247, and H264 each coordinate Zn(2+).

The protein belongs to the sugar phosphate cyclases superfamily. Dehydroquinate synthase family. It depends on Co(2+) as a cofactor. Zn(2+) is required as a cofactor. The cofactor is NAD(+).

The protein resides in the cytoplasm. It carries out the reaction 7-phospho-2-dehydro-3-deoxy-D-arabino-heptonate = 3-dehydroquinate + phosphate. It participates in metabolic intermediate biosynthesis; chorismate biosynthesis; chorismate from D-erythrose 4-phosphate and phosphoenolpyruvate: step 2/7. Functionally, catalyzes the conversion of 3-deoxy-D-arabino-heptulosonate 7-phosphate (DAHP) to dehydroquinate (DHQ). The sequence is that of 3-dehydroquinate synthase from Baumannia cicadellinicola subsp. Homalodisca coagulata.